The primary structure comprises 175 residues: Cytochrome c-type biogenesis protein CcmE (175 aa).

Over 1-8 (MNAVRRKK) the chain is Cytoplasmic. Residues 9–29 (LIWVAATLAGAIIAVLLVIYA) form a helical; Signal-anchor for type II membrane protein membrane-spanning segment. Topologically, residues 30–175 (IGQQTDYYFD…GNHTTSTLQE (146 aa)) are periplasmic. H124 and Y128 together coordinate heme. The disordered stretch occupies residues 142–175 (AAKGVTPTSEQFSPAIPVKQTAGEGNHTTSTLQE).

It belongs to the CcmE/CycJ family.

Its subcellular location is the cell inner membrane. Heme chaperone required for the biogenesis of c-type cytochromes. Transiently binds heme delivered by CcmC and transfers the heme to apo-cytochromes in a process facilitated by CcmF and CcmH. This is Cytochrome c-type biogenesis protein CcmE from Psychrobacter sp. (strain PRwf-1).